A 614-amino-acid polypeptide reads, in one-letter code: MPVLRSATSTQGRNMAGARALWRATGMKENDFGKPIIAVVNSFTQFVPGHVHLKDMGQLVAREIEKAGGVAKEFNTIAVDDGIAMGHGGMLYSLPSRDLIADSVEYMVNAHCADAMVCISNCDKITPGMLMAAMRLNIPTIFVSGGPMEAGKTKLSDKLIKLDLIDAMIQSADANVSDADVDVIEKSACPTCGACSGMFTANSMNCLTEALGLSLPGNGSMLATHADRKELFLEAGRKIVEICKRHYEQDDYSVLPRSIATFEAFENAMSLDIAMGGSSNTVLHLLAVAQEAGVDFKMADIDRLSRVVPCLSKIAPNTNKYHMEDVHRAGGIMGIVGELDRAGLIHRKVKTILGLTMEEQLNQYDIIRNKDEKLNKFFRAGPAGIRTTEAFSQDCRWDTVDDDRANGCIRDRAHAVTEEGGLAVLFGNIAEDGCIVKTAGVDESIWKFTGKAIVFESQEDAVAGILGGKVKEGHVVVIRYEGPKGGPGMQEMLYPTSYLKSMGLGKKCALLTDGRFSGGTSGLSIGHASPEAASGGAIGLVNNDDIIEIDIPNRAINLVLPDEELAVRRAAMEAKGARAWQPENRRREVSTALKIFGHFATSADKGAVRDKTKL.

Asp-81 serves as a coordination point for Mg(2+). Cys-122 lines the [2Fe-2S] cluster pocket. Residues Asp-123 and Lys-124 each contribute to the Mg(2+) site. Lys-124 carries the post-translational modification N6-carboxylysine. Cys-195 contacts [2Fe-2S] cluster. Glu-491 lines the Mg(2+) pocket. Ser-517 functions as the Proton acceptor in the catalytic mechanism.

The protein belongs to the IlvD/Edd family. As to quaternary structure, homodimer. It depends on [2Fe-2S] cluster as a cofactor. Requires Mg(2+) as cofactor.

The catalysed reaction is (2R)-2,3-dihydroxy-3-methylbutanoate = 3-methyl-2-oxobutanoate + H2O. It catalyses the reaction (2R,3R)-2,3-dihydroxy-3-methylpentanoate = (S)-3-methyl-2-oxopentanoate + H2O. Its pathway is amino-acid biosynthesis; L-isoleucine biosynthesis; L-isoleucine from 2-oxobutanoate: step 3/4. The protein operates within amino-acid biosynthesis; L-valine biosynthesis; L-valine from pyruvate: step 3/4. Its function is as follows. Functions in the biosynthesis of branched-chain amino acids. Catalyzes the dehydration of (2R,3R)-2,3-dihydroxy-3-methylpentanoate (2,3-dihydroxy-3-methylvalerate) into 2-oxo-3-methylpentanoate (2-oxo-3-methylvalerate) and of (2R)-2,3-dihydroxy-3-methylbutanoate (2,3-dihydroxyisovalerate) into 2-oxo-3-methylbutanoate (2-oxoisovalerate), the penultimate precursor to L-isoleucine and L-valine, respectively. The polypeptide is Dihydroxy-acid dehydratase (Actinobacillus succinogenes (strain ATCC 55618 / DSM 22257 / CCUG 43843 / 130Z)).